The sequence spans 429 residues: Xaa-Pro dipeptidase (429 aa).

Residues Asp-241, Asp-252, His-334, Glu-372, and Glu-411 each coordinate Mn(2+).

The protein belongs to the peptidase M24B family. Bacterial-type prolidase subfamily. It depends on Mn(2+) as a cofactor.

It catalyses the reaction Xaa-L-Pro dipeptide + H2O = an L-alpha-amino acid + L-proline. Its function is as follows. Splits dipeptides with a prolyl residue in the C-terminal position. This Marinobacter nauticus (strain ATCC 700491 / DSM 11845 / VT8) (Marinobacter aquaeolei) protein is Xaa-Pro dipeptidase.